Here is a 62-residue protein sequence, read N- to C-terminus: Keratin-associated protein 8-1 (62 aa).

The 12 X 2 AA repeats of G-[YCGS] stretch occupies residues 12–53 (GCYWGSYGYPLGYSVGCGYGSTYSPVGYGFGYGYNGSGAFGC).

It belongs to the KRTAP type 8 family. As to quaternary structure, interacts with wool keratins. As to expression, wool.

Its function is as follows. In the wool cortex, wool keratin intermediate filaments are embedded in an interfilamentous matrix, consisting of hair keratin-associated proteins (KRTAP), which are essential for the formation of a rigid and resistant wool shaft through their extensive disulfide bond cross-linking with abundant cysteine residues of wool keratins. The matrix proteins include the high-sulfur and high-glycine-tyrosine keratins. In Ovis aries (Sheep), this protein is Keratin-associated protein 8-1 (KRTAP8-1).